We begin with the raw amino-acid sequence, 561 residues long: Lysine--tRNA ligase (561 aa).

2 residues coordinate Mg(2+): glutamate 409 and glutamate 416.

The protein belongs to the class-II aminoacyl-tRNA synthetase family. Homodimer. Mg(2+) serves as cofactor.

The protein localises to the cytoplasm. It catalyses the reaction tRNA(Lys) + L-lysine + ATP = L-lysyl-tRNA(Lys) + AMP + diphosphate. The chain is Lysine--tRNA ligase from Trichormus variabilis (strain ATCC 29413 / PCC 7937) (Anabaena variabilis).